The following is a 400-amino-acid chain: Phosphoglycerate kinase (400 aa).

Substrate-binding positions include D19–N21, R38, H61–R64, R124, and R161. ATP-binding positions include K211, G299, E330, and G356–S359.

The protein belongs to the phosphoglycerate kinase family. Monomer.

It is found in the cytoplasm. It carries out the reaction (2R)-3-phosphoglycerate + ATP = (2R)-3-phospho-glyceroyl phosphate + ADP. The protein operates within carbohydrate degradation; glycolysis; pyruvate from D-glyceraldehyde 3-phosphate: step 2/5. The polypeptide is Phosphoglycerate kinase (Parafrankia sp. (strain EAN1pec)).